An 84-amino-acid chain; its full sequence is Small ribosomal subunit protein uS15 (84 aa).

This sequence belongs to the universal ribosomal protein uS15 family. Part of the 30S ribosomal subunit. Forms a bridge to the 50S subunit in the 70S ribosome, contacting the 23S rRNA.

Functionally, one of the primary rRNA binding proteins, it binds directly to 16S rRNA where it helps nucleate assembly of the platform of the 30S subunit by binding and bridging several RNA helices of the 16S rRNA. Its function is as follows. Forms an intersubunit bridge (bridge B4) with the 23S rRNA of the 50S subunit in the ribosome. In Fervidobacterium nodosum (strain ATCC 35602 / DSM 5306 / Rt17-B1), this protein is Small ribosomal subunit protein uS15.